Consider the following 317-residue polypeptide: Acetyl-coenzyme A carboxylase carboxyl transferase subunit beta (317 aa).

A disordered region spans residues 1–28 (MANNMTDTMTKPDINNDSTSLQQNGNKA). The region spanning 55 to 317 (PSTKCSSCHS…LCSVPNVDVQ (263 aa)) is the CoA carboxyltransferase N-terminal domain. The Zn(2+) site is built by Cys59, Cys62, Cys78, and Cys81. The C4-type zinc-finger motif lies at 59 to 81 (CSSCHSIITNTALIFNCYVCPHC).

The protein belongs to the AccD/PCCB family. In terms of assembly, acetyl-CoA carboxylase is a heterohexamer composed of biotin carboxyl carrier protein (AccB), biotin carboxylase (AccC) and two subunits each of ACCase subunit alpha (AccA) and ACCase subunit beta (AccD). It depends on Zn(2+) as a cofactor.

Its subcellular location is the cytoplasm. The enzyme catalyses N(6)-carboxybiotinyl-L-lysyl-[protein] + acetyl-CoA = N(6)-biotinyl-L-lysyl-[protein] + malonyl-CoA. It participates in lipid metabolism; malonyl-CoA biosynthesis; malonyl-CoA from acetyl-CoA: step 1/1. Functionally, component of the acetyl coenzyme A carboxylase (ACC) complex. Biotin carboxylase (BC) catalyzes the carboxylation of biotin on its carrier protein (BCCP) and then the CO(2) group is transferred by the transcarboxylase to acetyl-CoA to form malonyl-CoA. The protein is Acetyl-coenzyme A carboxylase carboxyl transferase subunit beta of Psychrobacter cryohalolentis (strain ATCC BAA-1226 / DSM 17306 / VKM B-2378 / K5).